Consider the following 640-residue polypeptide: Serine/threonine-protein phosphatase with EF-hands 1 (640 aa).

In terms of domain architecture, IQ spans Val-16–Phe-45. The segment at Ile-122–Ser-445 is catalytic. Positions 173, 175, 202, and 234 each coordinate Mn(2+). Catalysis depends on His-235, which acts as the Proton donor. 2 residues coordinate Mn(2+): His-286 and His-393. EF-hand domains lie at Ala-473–Leu-508, Arg-556–His-591, and Ile-596–Tyr-631. Positions 569, 571, 573, 580, 609, 611, 613, 615, and 620 each coordinate Ca(2+).

The protein belongs to the PPP phosphatase family. Requires Mn(2+) as cofactor. Mg(2+) is required as a cofactor.

It catalyses the reaction O-phospho-L-seryl-[protein] + H2O = L-seryl-[protein] + phosphate. The catalysed reaction is O-phospho-L-threonyl-[protein] + H2O = L-threonyl-[protein] + phosphate. Activated by calcium. Its function is as follows. May have a role in the recovery or adaptation response of photoreceptors. May have a role in development. This chain is Serine/threonine-protein phosphatase with EF-hands 1 (Ppef1), found in Rattus norvegicus (Rat).